A 533-amino-acid polypeptide reads, in one-letter code: L-aspartate oxidase (533 aa).

FAD-binding positions include 16–19 (SGAA), K38, 45–52 (ATFYAQGG), and D223. R290 serves as the catalytic Proton donor/acceptor. FAD is bound by residues E375 and 391–392 (SL).

The protein belongs to the FAD-dependent oxidoreductase 2 family. NadB subfamily. FAD is required as a cofactor.

It localises to the cytoplasm. The enzyme catalyses L-aspartate + O2 = iminosuccinate + H2O2. It functions in the pathway cofactor biosynthesis; NAD(+) biosynthesis; iminoaspartate from L-aspartate (oxidase route): step 1/1. Catalyzes the oxidation of L-aspartate to iminoaspartate, the first step in the de novo biosynthesis of NAD(+). The chain is L-aspartate oxidase (nadB) from Yersinia pestis.